The sequence spans 422 residues: Lipoyl synthase, mitochondrial (422 aa).

The transit peptide at 1–34 (MAASSTRLRCLYASSAPAWKKSPSQSIISLSRHY) directs the protein to the mitochondrion. Residues 37–48 (TSSTTPSLNPDE) show a composition bias toward polar residues. The tract at residues 37–70 (TSSTTPSLNPDESSSSSSSTIPKRRKTTTFRDKL) is disordered. The [4Fe-4S] cluster site is built by Cys146, Cys151, Cys157, Cys177, Cys181, Cys184, and Ser383. In terms of domain architecture, Radical SAM core spans 160 to 372 (GSDKSAATAT…RQRALEMGFL (213 aa)).

The protein belongs to the radical SAM superfamily. Lipoyl synthase family. [4Fe-4S] cluster is required as a cofactor.

It is found in the mitochondrion. The enzyme catalyses [[Fe-S] cluster scaffold protein carrying a second [4Fe-4S](2+) cluster] + N(6)-octanoyl-L-lysyl-[protein] + 2 oxidized [2Fe-2S]-[ferredoxin] + 2 S-adenosyl-L-methionine + 4 H(+) = [[Fe-S] cluster scaffold protein] + N(6)-[(R)-dihydrolipoyl]-L-lysyl-[protein] + 4 Fe(3+) + 2 hydrogen sulfide + 2 5'-deoxyadenosine + 2 L-methionine + 2 reduced [2Fe-2S]-[ferredoxin]. Its pathway is protein modification; protein lipoylation via endogenous pathway; protein N(6)-(lipoyl)lysine from octanoyl-[acyl-carrier-protein]: step 2/2. Functionally, catalyzes the radical-mediated insertion of two sulfur atoms into the C-6 and C-8 positions of the octanoyl moiety bound to the lipoyl domains of lipoate-dependent enzymes, thereby converting the octanoylated domains into lipoylated derivatives. In Talaromyces stipitatus (strain ATCC 10500 / CBS 375.48 / QM 6759 / NRRL 1006) (Penicillium stipitatum), this protein is Lipoyl synthase, mitochondrial.